A 503-amino-acid polypeptide reads, in one-letter code: Cytochrome P450 7A1 (503 aa).

A helical transmembrane segment spans residues 4–24 (ISLIWGIAVLVSCCIWFIVGI). Heme is bound at residue Cys-444.

It belongs to the cytochrome P450 family. Heme is required as a cofactor. As to expression, detected in liver (at protein level). Liver.

Its subcellular location is the endoplasmic reticulum membrane. It is found in the microsome membrane. It carries out the reaction cholesterol + reduced [NADPH--hemoprotein reductase] + O2 = 7alpha-hydroxycholesterol + oxidized [NADPH--hemoprotein reductase] + H2O + H(+). The enzyme catalyses 4beta-hydroxycholesterol + reduced [NADPH--hemoprotein reductase] + O2 = 4beta,7alpha-dihydroxycholesterol + oxidized [NADPH--hemoprotein reductase] + H2O + H(+). It catalyses the reaction lathosterol + reduced [NADPH--hemoprotein reductase] + O2 = 7alpha,8alpha-epoxy-5alpha-cholestan-3beta-ol + oxidized [NADPH--hemoprotein reductase] + H2O + H(+). The catalysed reaction is lathosterol + reduced [NADPH--hemoprotein reductase] + O2 = 5alpha-cholestan-7-oxo-3beta-ol + oxidized [NADPH--hemoprotein reductase] + H2O + H(+). It carries out the reaction 7-dehydrocholesterol + reduced [NADPH--hemoprotein reductase] + O2 = 7-oxocholesterol + oxidized [NADPH--hemoprotein reductase] + H2O + H(+). The enzyme catalyses (24S)-hydroxycholesterol + reduced [NADPH--hemoprotein reductase] + O2 = (24S)-7alpha-dihydroxycholesterol + oxidized [NADPH--hemoprotein reductase] + H2O + H(+). It catalyses the reaction (24R)-hydroxycholesterol + reduced [NADPH--hemoprotein reductase] + O2 = (24R)-7alpha-dihydroxycholesterol + oxidized [NADPH--hemoprotein reductase] + H2O + H(+). It participates in lipid metabolism; bile acid biosynthesis. It functions in the pathway steroid metabolism; cholesterol degradation. Its function is as follows. A cytochrome P450 monooxygenase involved in the metabolism of endogenous cholesterol and its oxygenated derivatives (oxysterols). Mechanistically, uses molecular oxygen inserting one oxygen atom into a substrate, and reducing the second into a water molecule, with two electrons provided by NADPH via cytochrome P450 reductase (CPR; NADPH-ferrihemoprotein reductase). Functions as a critical regulatory enzyme of bile acid biosynthesis and cholesterol homeostasis. Catalyzes the hydroxylation of carbon hydrogen bond at 7-alpha position of cholesterol, a rate-limiting step in cholesterol catabolism and bile acid biosynthesis. 7-alpha hydroxylates several oxysterols, including 4beta-hydroxycholesterol and 24-hydroxycholesterol. Catalyzes the oxidation of the 7,8 double bond of 7-dehydrocholesterol and lathosterol with direct and predominant formation of the 7-keto derivatives. The polypeptide is Cytochrome P450 7A1 (Cyp7a1) (Rattus norvegicus (Rat)).